The sequence spans 560 residues: Glutamate--tRNA ligase (560 aa).

A 'HIGH' region motif is present at residues 108-118 (PNPSGPLHLGH).

It belongs to the class-I aminoacyl-tRNA synthetase family. Glutamate--tRNA ligase type 2 subfamily.

Its subcellular location is the cytoplasm. It catalyses the reaction tRNA(Glu) + L-glutamate + ATP = L-glutamyl-tRNA(Glu) + AMP + diphosphate. Catalyzes the attachment of glutamate to tRNA(Glu) in a two-step reaction: glutamate is first activated by ATP to form Glu-AMP and then transferred to the acceptor end of tRNA(Glu). The protein is Glutamate--tRNA ligase of Methanocorpusculum labreanum (strain ATCC 43576 / DSM 4855 / Z).